The following is a 271-amino-acid chain: Phosphatidylglycerol--prolipoprotein diacylglyceryl transferase (271 aa).

A run of 4 helical transmembrane segments spans residues W25–V45, Y60–Y80, F103–L123, and A131–G151. Position 152 (R152) interacts with a 1,2-diacyl-sn-glycero-3-phospho-(1'-sn-glycerol). Helical transmembrane passes span P181–A201, G209–Y229, and G235–I255.

It belongs to the Lgt family.

It localises to the cell inner membrane. It carries out the reaction L-cysteinyl-[prolipoprotein] + a 1,2-diacyl-sn-glycero-3-phospho-(1'-sn-glycerol) = an S-1,2-diacyl-sn-glyceryl-L-cysteinyl-[prolipoprotein] + sn-glycerol 1-phosphate + H(+). The protein operates within protein modification; lipoprotein biosynthesis (diacylglyceryl transfer). In terms of biological role, catalyzes the transfer of the diacylglyceryl group from phosphatidylglycerol to the sulfhydryl group of the N-terminal cysteine of a prolipoprotein, the first step in the formation of mature lipoproteins. The polypeptide is Phosphatidylglycerol--prolipoprotein diacylglyceryl transferase (Campylobacter jejuni (strain RM1221)).